We begin with the raw amino-acid sequence, 370 residues long: Protein maelstrom 2 (370 aa).

Positions 2–68 (AQNKPNAFMA…VLERESKTER (67 aa)) form a DNA-binding region, HMG box.

Belongs to the maelstrom family.

It localises to the cytoplasm. Its subcellular location is the nucleus. Involved both in the piRNA and miRNA metabolic processes. As a component of the meiotic nuage, plays a central role during oogenesis by repressing transposable elements and preventing their mobilization, which is essential for the germline integrity. Repression of transposable elements is mediated via the piRNA metabolic process, which mediates the repression of transposable elements during meiosis by forming complexes composed of piRNAs and Piwi proteins and governs the repression of transposons. As a nuclear component, it is required for proper differentiation in the germline stem cell (GSC) lineage by repressing microRNA-7 (miR-7), thereby acting as an indirect regulator of bag-of-marbles (Bam). Acts by binding to the promoter of miR-7 gene and repressing its expression; miR-7 repression alleviates the Bam repression by miR-7, thereby allowing differentiation in the germline stem cell (GSC) lineage. This is Protein maelstrom 2 (mael2) from Drosophila pseudoobscura pseudoobscura (Fruit fly).